Reading from the N-terminus, the 420-residue chain is Serine hydroxymethyltransferase (420 aa).

Residues leucine 117 and 121–123 (GHL) each bind (6S)-5,6,7,8-tetrahydrofolate. Lysine 226 is subject to N6-(pyridoxal phosphate)lysine.

It belongs to the SHMT family. In terms of assembly, homodimer. The cofactor is pyridoxal 5'-phosphate.

It localises to the cytoplasm. It catalyses the reaction (6R)-5,10-methylene-5,6,7,8-tetrahydrofolate + glycine + H2O = (6S)-5,6,7,8-tetrahydrofolate + L-serine. It functions in the pathway one-carbon metabolism; tetrahydrofolate interconversion. It participates in amino-acid biosynthesis; glycine biosynthesis; glycine from L-serine: step 1/1. Catalyzes the reversible interconversion of serine and glycine with tetrahydrofolate (THF) serving as the one-carbon carrier. This reaction serves as the major source of one-carbon groups required for the biosynthesis of purines, thymidylate, methionine, and other important biomolecules. Also exhibits THF-independent aldolase activity toward beta-hydroxyamino acids, producing glycine and aldehydes, via a retro-aldol mechanism. The chain is Serine hydroxymethyltransferase from Rhodopirellula baltica (strain DSM 10527 / NCIMB 13988 / SH1).